Here is a 778-residue protein sequence, read N- to C-terminus: Ribonucleoside-diphosphate reductase large subunit (778 aa).

Substrate-binding positions include serine 177, 192–193, glycine 221, 419–423, and 613–617; these read SC, NLCIE, and PTATS. Cysteine 193 and cysteine 439 are joined by a disulfide. The active-site Proton acceptor is asparagine 419. Catalysis depends on cysteine 421, which acts as the Cysteine radical intermediate. Glutamate 423 acts as the Proton acceptor in catalysis.

It belongs to the ribonucleoside diphosphate reductase large chain family. Heterotetramer composed of a homodimer of the large subunit (R1) and a homodimer of the small subunit (R2). Larger multisubunit protein complex are also active, composed of (R1)n(R2)n.

The catalysed reaction is a 2'-deoxyribonucleoside 5'-diphosphate + [thioredoxin]-disulfide + H2O = a ribonucleoside 5'-diphosphate + [thioredoxin]-dithiol. With respect to regulation, under complex allosteric control mediated by deoxynucleoside triphosphates and ATP binding. The type of nucleotide bound at the specificity site determines substrate preference. It seems probable that ATP makes the enzyme reduce CDP and UDP, dGTP favors ADP reduction and dTTP favors GDP reduction. Functionally, ribonucleoside-diphosphate reductase holoenzyme provides the precursors necessary for viral DNA synthesis. Allows virus growth in non-dividing cells. Catalyzes the biosynthesis of deoxyribonucleotides from the corresponding ribonucleotides. This African swine fever virus (isolate Tick/South Africa/Pretoriuskop Pr4/1996) (ASFV) protein is Ribonucleoside-diphosphate reductase large subunit.